A 194-amino-acid polypeptide reads, in one-letter code: Peptidyl-tRNA hydrolase (194 aa).

A tRNA-binding site is contributed by Tyr21. His26 (proton acceptor) is an active-site residue. TRNA-binding residues include Tyr72, Asn74, and Asn120.

The protein belongs to the PTH family. In terms of assembly, monomer.

Its subcellular location is the cytoplasm. It carries out the reaction an N-acyl-L-alpha-aminoacyl-tRNA + H2O = an N-acyl-L-amino acid + a tRNA + H(+). Its function is as follows. Hydrolyzes ribosome-free peptidyl-tRNAs (with 1 or more amino acids incorporated), which drop off the ribosome during protein synthesis, or as a result of ribosome stalling. In terms of biological role, catalyzes the release of premature peptidyl moieties from peptidyl-tRNA molecules trapped in stalled 50S ribosomal subunits, and thus maintains levels of free tRNAs and 50S ribosomes. This Halorhodospira halophila (strain DSM 244 / SL1) (Ectothiorhodospira halophila (strain DSM 244 / SL1)) protein is Peptidyl-tRNA hydrolase.